The primary structure comprises 580 residues: DNA mismatch repair protein MutL (580 aa).

This sequence belongs to the DNA mismatch repair MutL/HexB family.

Functionally, this protein is involved in the repair of mismatches in DNA. It is required for dam-dependent methyl-directed DNA mismatch repair. May act as a 'molecular matchmaker', a protein that promotes the formation of a stable complex between two or more DNA-binding proteins in an ATP-dependent manner without itself being part of a final effector complex. The chain is DNA mismatch repair protein MutL from Chlamydia caviae (strain ATCC VR-813 / DSM 19441 / 03DC25 / GPIC) (Chlamydophila caviae).